The primary structure comprises 274 residues: Diaminopimelate epimerase (274 aa).

Residues N11, Q44, and N64 each contribute to the substrate site. Residue C73 is the Proton donor of the active site. Substrate contacts are provided by residues 74–75, N157, N190, and 208–209; these read GN and ER. C217 serves as the catalytic Proton acceptor. 218 to 219 is a binding site for substrate; the sequence is GS.

It belongs to the diaminopimelate epimerase family. As to quaternary structure, homodimer.

It localises to the cytoplasm. It carries out the reaction (2S,6S)-2,6-diaminopimelate = meso-2,6-diaminopimelate. The protein operates within amino-acid biosynthesis; L-lysine biosynthesis via DAP pathway; DL-2,6-diaminopimelate from LL-2,6-diaminopimelate: step 1/1. Catalyzes the stereoinversion of LL-2,6-diaminopimelate (L,L-DAP) to meso-diaminopimelate (meso-DAP), a precursor of L-lysine and an essential component of the bacterial peptidoglycan. This Glaesserella parasuis serovar 5 (strain SH0165) (Haemophilus parasuis) protein is Diaminopimelate epimerase.